A 386-amino-acid chain; its full sequence is Ovalbumin (386 aa).

Glycine 2 bears the N-acetylglycine mark. The segment at residues 22-48 (HHANENIFYSPFTIISALAMVYLGAKD) is a signal peptide (not cleaved). The residue at position 69 (serine 69) is a Phosphoserine. A disulfide bond links cysteine 74 and cysteine 121. N-linked (GlcNAc...) asparagine glycans are attached at residues asparagine 293 and asparagine 312. Position 345 is a phosphoserine (serine 345). Residue asparagine 372 is glycosylated (N-linked (GlcNAc...) asparagine).

This sequence belongs to the serpin family. Ov-serpin subfamily. The signal sequence is not cleaved. The functional signal for membrane translocation of ovalbumin becomes accessible when the nascent chain is 50 to 60 residues long. The hydrophobic sequence which lies between residues 27 and 43 folds back on the preceding residues to form an amphipathic hairpin structure which is the signal element recognized by the membrane. Major protein of egg white.

The protein localises to the secreted. Functionally, storage protein of egg white. Lack protease inhibitory activity. The protein is Ovalbumin (SERPINB14) of Meleagris gallopavo (Wild turkey).